A 498-amino-acid chain; its full sequence is DEAD-box ATP-dependent RNA helicase 6 (498 aa).

Residues 1-109 (MDPRARYPPG…WKAQLKLPPQ (109 aa)) form a disordered region. Over residues 33–49 (QHQHQHQQPPHPHHHQY) the composition is skewed to basic residues. Low complexity-rich tracts occupy residues 50-61 (VQRQPQPQQTPH) and 75-86 (AAEAAGASEQKA). Positions 124–152 (NEFEDYFLKRELLMGIYEKGFERPSPIQE) match the Q motif motif. The Helicase ATP-binding domain maps to 155-325 (IPIALTGSDI…DKYLPKPYVI (171 aa)). 168–175 (AKNGTGKT) provides a ligand contact to ATP. The DEAD box signature appears at 273–276 (DEAD). Residues 335–495 (GITQFYAFVE…PIPPQIDRAI (161 aa)) form the Helicase C-terminal domain.

The protein belongs to the DEAD box helicase family. DDX6/DHH1 subfamily.

It is found in the cytoplasm. The protein localises to the P-body. The catalysed reaction is ATP + H2O = ADP + phosphate + H(+). ATP-dependent RNA helicase involved in mRNA turnover, and more specifically in mRNA decapping. The chain is DEAD-box ATP-dependent RNA helicase 6 from Oryza sativa subsp. japonica (Rice).